Reading from the N-terminus, the 580-residue chain is Mucolipin-1 (580 aa).

The interval Met-1–Glu-38 is disordered. Residues Met-1–Lys-65 lie on the Cytoplasmic side of the membrane. Ser-10 is modified (phosphoserine). Residues Glu-11–Leu-16 carry the Dileucine motif; mediates targeting to lysosomes motif. The interval Arg-42 to Lys-62 is interaction with phosphoinositides. Residues Leu-66–Ser-86 form a helical membrane-spanning segment. The Extracellular portion of the chain corresponds to Asn-87–Arg-298. Residues Leu-107 to Thr-121 form an extracellular/lumenal pore loop region. Cys-166 and Cys-192 are disulfide-bonded. An N-linked (GlcNAc...) asparagine glycan is attached at Asn-230. Cys-253 and Cys-284 form a disulfide bridge. A helical transmembrane segment spans residues Leu-299–Leu-321. The Cytoplasmic portion of the chain corresponds to Arg-322–Phe-350. Residues Val-351–Met-371 form a helical membrane-spanning segment. The Extracellular portion of the chain corresponds to Lys-372–Ser-382. Residues Tyr-383 to Leu-405 traverse the membrane as a helical segment. The Cytoplasmic segment spans residues Thr-406 to Arg-427. The helical transmembrane segment at Phe-428–Gly-448 threads the bilayer. Residues Pro-449–Ser-456 lie on the Extracellular side of the membrane. Residues Leu-457–Phe-477 constitute an intramembrane region (pore-forming). Positions Asn-469–Phe-474 match the Selectivity filter motif. Residues Ala-478–Trp-491 are Extracellular-facing. Residues Leu-492 to Phe-513 form a helical membrane-spanning segment. At Ile-514–Asn-580 the chain is on the cytoplasmic side. Phosphoserine; by PAK occurs at positions 557 and 559. Residues Cys-565–Cys-567 form a required for palmitoylation and association with membranes region. The short motif at Glu-573 to Leu-578 is the Dileucine internalization motif; mediates AP2 complex-dependent internalization element.

This sequence belongs to the transient receptor (TC 1.A.4) family. Polycystin subfamily. MCOLN1 sub-subfamily. As to quaternary structure, homotetramer. Homooligomer. Can heterooligomerize with MCOLN2 or MCOLN3; heteromeric assemblies have different channel properties as compared to the respective homooligomers and may be tissue-specific. Interacts with PDCD6. Interacts with TMEM163. Interacts with LAPTM4B. In terms of processing, palmitoylated; involved in association with membranes. Post-translationally, phosphorylation by PKA inhibits channel activity. Dephosphorylation increases activity. Proteolytically cleaved probably involving multiple lysosomal proteases including cathepsin B; inhibits lysosomal channel activity. In terms of tissue distribution, widely expressed in adult and fetal tissues.

It is found in the late endosome membrane. It localises to the lysosome membrane. Its subcellular location is the cytoplasmic vesicle membrane. The protein localises to the cell projection. The protein resides in the phagocytic cup. It is found in the cytoplasmic vesicle. It localises to the phagosome membrane. Its subcellular location is the cell membrane. The catalysed reaction is Ca(2+)(in) = Ca(2+)(out). The enzyme catalyses Fe(2+)(in) = Fe(2+)(out). It carries out the reaction Mg(2+)(in) = Mg(2+)(out). It catalyses the reaction K(+)(in) = K(+)(out). The catalysed reaction is Na(+)(in) = Na(+)(out). Its activity is regulated as follows. Channel activity is controlled by multiple regulatory mechanisms in different subcellular compartments. Channel function is transiently modulated by changes in Ca(2+) in a pH-dependent manner; pH changes modify the aggregation state of unitary channels; a negative cooperativity between extracellular/lumenal Ca(2+) and H(+) is suggested. Regulated by phosphoinositides in a compartment-specific manner: in lysosomes activated by PtdIns(3,5)P2 (Phosphatidylinositol 3,5-bisphosphate) and at the plasma membrane inhibited by PtdIns(4,5)P2 (Phosphatidylinositol 4,5-bisphosphate). Functionally, nonselective cation channel probably playing a role in the regulation of membrane trafficking events and of metal homeostasis. Acts as a Ca(2+)-permeable cation channel with inwardly rectifying activity. Proposed to play a major role in Ca(2+) release from late endosome and lysosome vesicles to the cytoplasm, which is important for many lysosome-dependent cellular events, including the fusion and trafficking of these organelles, exocytosis and autophagy. Required for efficient uptake of large particles in macrophages in which Ca(2+) release from the lysosomes triggers lysosomal exocytosis. May also play a role in phagosome-lysosome fusion. Involved in lactosylceramide trafficking indicative for a role in the regulation of late endocytic membrane fusion/fission events. By mediating lysosomal Ca(2+) release is involved in regulation of mTORC1 signaling and in mTOR/TFEB-dependent lysosomal adaptation to environmental cues such as nutrient levels. Seems to act as lysosomal active oxygen species (ROS) sensor involved in ROS-induced TFEB activation and autophagy. Also functions as a Fe(2+) permeable channel in late endosomes and lysosomes. Also permeable to Mg(2+), Na(+). K(+) and Cs(+). Proposed to play a role in zinc homeostasis probably implicating its association with TMEM163 In adaptive immunity, TRPML2 and TRPML1 may play redundant roles in the function of the specialized lysosomes of B cells. Its function is as follows. May contribute to cellular lipase activity within the late endosomal pathway or at the cell surface which may be involved in processes of membrane reshaping and vesiculation, especially the growth of tubular structures. However, it is not known, whether it conveys the enzymatic activity directly, or merely facilitates the activity of an associated phospholipase. This is Mucolipin-1 from Homo sapiens (Human).